The chain runs to 145 residues: Large ribosomal subunit protein uL11 (145 aa).

The protein belongs to the universal ribosomal protein uL11 family. Part of the ribosomal stalk of the 50S ribosomal subunit. Interacts with L10 and the large rRNA to form the base of the stalk. L10 forms an elongated spine to which L12 dimers bind in a sequential fashion forming a multimeric L10(L12)X complex. One or more lysine residues are methylated.

In terms of biological role, forms part of the ribosomal stalk which helps the ribosome interact with GTP-bound translation factors. The polypeptide is Large ribosomal subunit protein uL11 (Hydrogenobaculum sp. (strain Y04AAS1)).